A 210-amino-acid polypeptide reads, in one-letter code: Redox-sensing transcriptional repressor Rex (210 aa).

The segment at residues 17–56 (KYYRYLAELMDNDVDRISSKELSEKIGFTASQIRQDLNNF) is a DNA-binding region (H-T-H motif). 91–96 (GAGNIG) is an NAD(+) binding site.

Belongs to the transcriptional regulatory Rex family. In terms of assembly, homodimer.

It is found in the cytoplasm. Modulates transcription in response to changes in cellular NADH/NAD(+) redox state. The protein is Redox-sensing transcriptional repressor Rex of Clostridium novyi (strain NT).